We begin with the raw amino-acid sequence, 405 residues long: Arginine biosynthesis bifunctional protein ArgJ (405 aa).

Thr152, Lys178, Thr189, Glu276, Asn400, and Thr405 together coordinate substrate. Catalysis depends on Thr189, which acts as the Nucleophile.

This sequence belongs to the ArgJ family. In terms of assembly, heterotetramer of two alpha and two beta chains.

The protein resides in the cytoplasm. The enzyme catalyses N(2)-acetyl-L-ornithine + L-glutamate = N-acetyl-L-glutamate + L-ornithine. The catalysed reaction is L-glutamate + acetyl-CoA = N-acetyl-L-glutamate + CoA + H(+). The protein operates within amino-acid biosynthesis; L-arginine biosynthesis; L-ornithine and N-acetyl-L-glutamate from L-glutamate and N(2)-acetyl-L-ornithine (cyclic): step 1/1. Its pathway is amino-acid biosynthesis; L-arginine biosynthesis; N(2)-acetyl-L-ornithine from L-glutamate: step 1/4. Catalyzes two activities which are involved in the cyclic version of arginine biosynthesis: the synthesis of N-acetylglutamate from glutamate and acetyl-CoA as the acetyl donor, and of ornithine by transacetylation between N(2)-acetylornithine and glutamate. The chain is Arginine biosynthesis bifunctional protein ArgJ from Pseudomonas syringae pv. tomato (strain ATCC BAA-871 / DC3000).